A 343-amino-acid chain; its full sequence is S-adenosylmethionine:tRNA ribosyltransferase-isomerase (343 aa).

The protein belongs to the QueA family. As to quaternary structure, monomer.

It localises to the cytoplasm. It carries out the reaction 7-aminomethyl-7-carbaguanosine(34) in tRNA + S-adenosyl-L-methionine = epoxyqueuosine(34) in tRNA + adenine + L-methionine + 2 H(+). It functions in the pathway tRNA modification; tRNA-queuosine biosynthesis. Transfers and isomerizes the ribose moiety from AdoMet to the 7-aminomethyl group of 7-deazaguanine (preQ1-tRNA) to give epoxyqueuosine (oQ-tRNA). This Hydrogenobaculum sp. (strain Y04AAS1) protein is S-adenosylmethionine:tRNA ribosyltransferase-isomerase.